A 91-amino-acid chain; its full sequence is Cell division protein ZapA (91 aa).

Positions 59 to 86 (TAVNIANEYLKLKEEYDRLAAKLRREKG) form a coiled coil.

It belongs to the ZapA family. Type 2 subfamily. As to quaternary structure, homodimer. Interacts with FtsZ.

The protein localises to the cytoplasm. Its function is as follows. Activator of cell division through the inhibition of FtsZ GTPase activity, therefore promoting FtsZ assembly into bundles of protofilaments necessary for the formation of the division Z ring. It is recruited early at mid-cell but it is not essential for cell division. The sequence is that of Cell division protein ZapA from Geobacillus thermodenitrificans (strain NG80-2).